The sequence spans 437 residues: MALAGAPAGGPCAPALEALLGAGALRLLDSSQIVIISAAQDASAPPAPTGPAAPAAGPCDPDLLLFATPQAPRPTPSAPRPALGRPPVKRRLDLETDHQYLAESSGPARGRGRHPGKGVKSPGEKSRYETSLNLTTKRFLELLSHSADGVVDLNWAAEVLKVQKRRIYDITNVLEGIQLIAKKSKNHIQWLGSHTTVGVGGRLEGLTQDLRQLQESEQQLDHLMNICTTQLRLLSEDTDSQRLAYVTCQDLRSIADPAEQMVMVIKAPPETQLQAVDSSENFQISLKSKQGPIDVFLCPEETVGGISPGKTPSQEVTSEEENRATDSATIVSPPPSSPPSSLTTDPSQSLLSLEQEPLLSRMGSLRAPVDEDRLSPLVAADSLLEHVREDFSGLLPEEFISLSPPHEALDYHFGLEEGEGIRDLFDCDFGDLTPLDF.

2 disordered regions span residues 42-87 (ASAP…GRPP) and 101-128 (LAESSGPARGRGRHPGKGVKSPGEKSRY). Residues 67 to 108 (ATPQAPRPTPSAPRPALGRPPVKRRLDLETDHQYLAESSGPA) form a cyclin A:CDK2 binding region. The tract at residues 89–191 (KRRLDLETDH…KKSKNHIQWL (103 aa)) is interaction with BIRC2/c-IAP1. The DNA-binding element occupies 110–194 (GRGRHPGKGV…KNHIQWLGSH (85 aa)). 3 positions are modified to N6-acetyllysine: Lys117, Lys120, and Lys125. Residues 153–174 (LNWAAEVLKVQKRRIYDITNVL) are leucine-zipper. The DEF box signature appears at 158–194 (EVLKVQKRRIYDITNVLEGIQLIAKKSKNHIQWLGSH). N6-methyllysine; by SETD7 is present on Lys185. The tract at residues 192 to 382 (GSHTTVGVGG…RLSPLVAADS (191 aa)) is required for interaction with TRIM28. Positions 195–284 (TTVGVGGRLE…AVDSSENFQI (90 aa)) are dimerization. The disordered stretch occupies residues 300–349 (EETVGGISPGKTPSQEVTSEEENRATDSATIVSPPPSSPPSSLTTDPSQS). Residues 339 to 349 (PSSLTTDPSQS) are compositionally biased toward low complexity. Residue Ser364 is modified to Phosphoserine; by CHEK2. The interval 368–437 (PVDEDRLSPL…DFGDLTPLDF (70 aa)) is transactivation. Phosphoserine is present on Ser375. Ser403 carries the post-translational modification Phosphoserine; by GSK3-beta. The segment at 409–426 (LDYHFGLEEGEGIRDLFD) is RB1 binding. The residue at position 433 (Thr433) is a Phosphothreonine; by GSK3-beta.

Belongs to the E2F/DP family. In terms of assembly, component of the DRTF1/E2F transcription factor complex. Forms heterodimers with DP family members. The E2F1 complex binds specifically hypophosphorylated RB1, the interaction represses E2F1-driven transcription. During the cell cycle, RB1 becomes phosphorylated in mid-to-late G1 phase, detaches from the DRTF1/E2F complex, rendering E2F transcriptionally active. Viral oncoproteins, notably E1A, T-antigen and HPV E7, are capable of sequestering RB1, thus releasing the active complex. Interacts with TRRAP, which probably mediates its interaction with histone acetyltransferase complexes, leading to transcription activation. Binds TOPBP1 and EAPP. Interacts with ARID3A. Interacts with TRIM28; the interaction inhibits E2F1 acetylation through recruiting HDAC1 and represses its transcriptional activity. Interaction with KAT2B; the interaction acetylates E2F1 enhancing its DNA-binding and transcriptional activity. Interacts with BIRC2/c-IAP1 (via BIR domains). The complex TFDP1:E2F1 interacts with CEBPA; the interaction prevents CEBPA binding to target genes promoters and represses its transcriptional activity. Interacts with RRP1B. Interacts with HCFC1. Interacts with KMT2E; the interaction is probably indirect and is mediated via HCFC1. Interacts with DCAF5 and L3MBTL3; the interaction requires methylation at Lys-185 and is necessary to target E2F1 for ubiquitination by the CRL4-DCAF5 E3 ubiquitin ligase complex. (Microbial infection) Interacts with human cytomegalovirus/HHV-5 protein UL123. Phosphorylated by CDK2 and cyclin A-CDK2 in the S-phase. Phosphorylation at Ser-364 by CHEK2 stabilizes E2F1 upon DNA damage and regulates its effect on transcription and apoptosis. Phosphorylation at Ser-403 by GSK3B promotes interaction with USP11, leading to its deubiquitination and stabilization. Post-translationally, ubiquitinated via 'Lys-63'-linked ubiquitin, leading to its degradation. Deubiquitinated by USP11 following phosphorylation by GSK3B, promoting its stability. In terms of processing, acetylation stimulates DNA-binding. Enhanced under stress conditions such as DNA damage and inhibited by retinoblastoma protein RB1. Regulated by KAP1/TRIM28 which recruits HDAC1 to E2F1 resulting in deacetylation. Acetylated by P/CAF/KAT2B. Methylation at Lys-185 by SETD7 promotes E2F1 ubiquitin-dependent proteasomal degradation.

Its subcellular location is the nucleus. BIRC2/c-IAP1 stimulates its transcriptional activity. Transcription activator that binds DNA cooperatively with DP proteins through the E2 recognition site, 5'-TTTC[CG]CGC-3' found in the promoter region of a number of genes whose products are involved in cell cycle regulation or in DNA replication. The DRTF1/E2F complex functions in the control of cell-cycle progression from G1 to S phase. E2F1 binds preferentially RB1 in a cell-cycle dependent manner. It can mediate both cell proliferation and TP53/p53-dependent apoptosis. Blocks adipocyte differentiation by binding to specific promoters repressing CEBPA binding to its target gene promoters. Directly activates transcription of PEG10. Positively regulates transcription of RRP1B. This chain is Transcription factor E2F1, found in Homo sapiens (Human).